We begin with the raw amino-acid sequence, 233 residues long: Ion-translocating oxidoreductase complex subunit E (233 aa).

A run of 6 helical transmembrane segments spans residues 18 to 38, 39 to 59, 69 to 89, 92 to 112, 128 to 148, and 182 to 202; these read ALVQ…ATNA, LGLG…VSAL, IPIY…LINA, FGLY…CIVI, ALDG…LGAL, and PFLL…LLAG.

The protein belongs to the NqrDE/RnfAE family. The complex is composed of six subunits: RnfA, RnfB, RnfC, RnfD, RnfE and RnfG.

Its subcellular location is the cell inner membrane. Functionally, part of a membrane-bound complex that couples electron transfer with translocation of ions across the membrane. The polypeptide is Ion-translocating oxidoreductase complex subunit E (Yersinia pseudotuberculosis serotype O:1b (strain IP 31758)).